The primary structure comprises 437 residues: 3-phosphoshikimate 1-carboxyvinyltransferase (437 aa).

3 residues coordinate 3-phosphoshikimate: Lys-28, Ser-29, and Arg-33. A phosphoenolpyruvate-binding site is contributed by Lys-28. Residues Gly-97 and Arg-125 each contribute to the phosphoenolpyruvate site. 3-phosphoshikimate contacts are provided by Ser-168, Ser-169, Gln-170, Glu-316, and His-343. Position 170 (Gln-170) interacts with phosphoenolpyruvate. The active-site Proton acceptor is Glu-316. Residues Arg-347, Arg-388, and Lys-413 each coordinate phosphoenolpyruvate.

This sequence belongs to the EPSP synthase family. As to quaternary structure, monomer.

Its subcellular location is the cytoplasm. It catalyses the reaction 3-phosphoshikimate + phosphoenolpyruvate = 5-O-(1-carboxyvinyl)-3-phosphoshikimate + phosphate. Its pathway is metabolic intermediate biosynthesis; chorismate biosynthesis; chorismate from D-erythrose 4-phosphate and phosphoenolpyruvate: step 6/7. Its function is as follows. Catalyzes the transfer of the enolpyruvyl moiety of phosphoenolpyruvate (PEP) to the 5-hydroxyl of shikimate-3-phosphate (S3P) to produce enolpyruvyl shikimate-3-phosphate and inorganic phosphate. In Rhodococcus erythropolis (strain PR4 / NBRC 100887), this protein is 3-phosphoshikimate 1-carboxyvinyltransferase.